Consider the following 321-residue polypeptide: tRNA pseudouridine synthase B (321 aa).

The Nucleophile role is filled by Asp47.

It belongs to the pseudouridine synthase TruB family. Type 1 subfamily.

It catalyses the reaction uridine(55) in tRNA = pseudouridine(55) in tRNA. Responsible for synthesis of pseudouridine from uracil-55 in the psi GC loop of transfer RNAs. The chain is tRNA pseudouridine synthase B from Shewanella baltica (strain OS223).